A 432-amino-acid polypeptide reads, in one-letter code: MSNNVVVLGTQWGDEGKGKVVDILTERAKYVIRYQGGHNAGHTLVINGEKTILHLIPSGILRENVKSIIAHGVVLSPEALIKEIHELEARGIPVRQRMLISEACPLLLSYHVAMDIAREKARGTNALGTTGRGIGPAYEDKVARRALRVSDLFNKESFAIKLKDIVDYYNFQLVHYYKVEAVSYQKILNDIMVVTDMLTSMVADISVLLYNAYQQGDIMMFEGAQGTLLDIDHGTYPYVTSSNTTAGCVTTGSGLGPHYIGYVLGIVKAYSTRVGAGPFPTELFDDTGNFLCLKGHEFGATTGRRRRTGWLDAVALRRAVHINSISGLCLTKLDVLDGLKEIKICSAYRMQDGCIIYTTPIALEKWEGIEPIYETLPGWNETTVGIQALADLPRAAHQYIKLIEELTRVPVDIISTGPDRRDTIILHDPFSD.

GTP contacts are provided by residues 13–19 (GDEGKGK) and 41–43 (GHT). The Proton acceptor role is filled by aspartate 14. Aspartate 14 and glycine 41 together coordinate Mg(2+). IMP contacts are provided by residues 14 to 17 (DEGK), 39 to 42 (NAGH), threonine 130, arginine 144, glutamine 225, threonine 240, and arginine 304. The active-site Proton donor is histidine 42. 300 to 306 (ATTGRRR) is a binding site for substrate. Residues arginine 306, 332–334 (KLD), and 415–417 (STG) contribute to the GTP site.

It belongs to the adenylosuccinate synthetase family. Homodimer. Mg(2+) serves as cofactor.

Its subcellular location is the cytoplasm. It catalyses the reaction IMP + L-aspartate + GTP = N(6)-(1,2-dicarboxyethyl)-AMP + GDP + phosphate + 2 H(+). It participates in purine metabolism; AMP biosynthesis via de novo pathway; AMP from IMP: step 1/2. Its function is as follows. Plays an important role in the de novo pathway of purine nucleotide biosynthesis. Catalyzes the first committed step in the biosynthesis of AMP from IMP. The chain is Adenylosuccinate synthetase from Baumannia cicadellinicola subsp. Homalodisca coagulata.